Consider the following 712-residue polypeptide: MSQEKQVFSIDLAGRQLTVETGQLAKQANGAVLVRYGDTAVLSTATASKEAKNVDFFPLTVNYEERLYAVGKIPGGFIKREGRPSEKAILASRLIDRPIRPLFADGFRNEVQVVSIVMSVDQDCSSEMAAMLGSSLALSISDIPFEGPIAGATVGRINGEFVINPTVEQQEQSDIHLVVAGTKDAINMVEAGADQVPEETMLEAIMFGHDEIKRLIAFQEEIVQAVGKEKSEVKLYEVDADLNQAVREMAEKDMHSAIQVHEKHAREDAINEVKKRVIEHYEAQEADADTLGQVNEILYKIVKEEVRRLITVEKIRPDGRKGDEIRPLASEVGILSRTHGSGLFTRGQTQALSICTLGALGDVQILDGLGVEESKRFMHHYNFPSFSVGETRPMRGPGRREIGHGALGERALEPVIPSEKDFPYTVRLVSEVLESNGSTSQASICGSTLAMMDAGVPLKAPVAGIAMGLVKTGEHYTILSDIQGMEDHLGDMDFKVAGTAHGVTALQMDIKIDGLSREILEEALQQAKVGRVHILNHMLSVIAEPRTELSAYAPKIITMTINPDKIRDVIGPSGKQINKIIEETGVKIDIEQDGTVFISSINQEMNDKAKKIIEDIVREVQVGEIYEGKVKRVEKFGAFVELFSDKDGLVHISELALERVGKVEDVVKIGDVITVKVIEIDKQGRVNLSRKVLLKEEQEKEAAKEENKQEQQ.

Mg(2+) is bound by residues Asp487 and Asp493. The 60-residue stretch at 554–613 folds into the KH domain; the sequence is PKIITMTINPDKIRDVIGPSGKQINKIIEETGVKIDIEQDGTVFISSINQEMNDKAKKII. In terms of domain architecture, S1 motif spans 623-691; it reads GEIYEGKVKR…KQGRVNLSRK (69 aa).

This sequence belongs to the polyribonucleotide nucleotidyltransferase family. Mg(2+) serves as cofactor.

Its subcellular location is the cytoplasm. The enzyme catalyses RNA(n+1) + phosphate = RNA(n) + a ribonucleoside 5'-diphosphate. Functionally, involved in mRNA degradation. Catalyzes the phosphorolysis of single-stranded polyribonucleotides processively in the 3'- to 5'-direction. In Bacillus cereus (strain AH820), this protein is Polyribonucleotide nucleotidyltransferase.